Reading from the N-terminus, the 463-residue chain is A-type ATP synthase subunit B (463 aa).

This sequence belongs to the ATPase alpha/beta chains family. In terms of assembly, has multiple subunits with at least A(3), B(3), C, D, E, F, H, I and proteolipid K(x).

The protein localises to the cell membrane. In terms of biological role, component of the A-type ATP synthase that produces ATP from ADP in the presence of a proton gradient across the membrane. The B chain is a regulatory subunit. This is A-type ATP synthase subunit B from Desulfurococcus sp. (strain SY).